The chain runs to 131 residues: Metalloproteinase inhibitor (131 aa).

Residues 1-29 form the signal peptide; that stretch reads MVRKRALGLAGSALTLVLGAVGFTAPAQA. Disulfide bonds link C33-C39 and C93-C98.

In terms of biological role, inhibits microbial metallo-proteinases, such as thermolysin, but not serine, thiol, or carboxyl proteinases. This Streptomyces nigrescens protein is Metalloproteinase inhibitor (smpI).